The primary structure comprises 105 residues: Fluoride-specific ion channel FluC (105 aa).

Helical transmembrane passes span 14 to 34 (FPLP…VFVV), 44 to 64 (LSPL…AFSL), and 79 to 99 (ALYV…GLWL). Na(+)-binding residues include glycine 54 and threonine 57.

This sequence belongs to the fluoride channel Fluc/FEX (TC 1.A.43) family.

Its subcellular location is the cell inner membrane. It catalyses the reaction fluoride(in) = fluoride(out). Its activity is regulated as follows. Na(+) is not transported, but it plays an essential structural role and its presence is essential for fluoride channel function. In terms of biological role, fluoride-specific ion channel. Important for reducing fluoride concentration in the cell, thus reducing its toxicity. The chain is Fluoride-specific ion channel FluC from Jannaschia sp. (strain CCS1).